Consider the following 223-residue polypeptide: Deoxyribose-phosphate aldolase (223 aa).

Catalysis depends on aspartate 89, which acts as the Proton donor/acceptor. Lysine 152 acts as the Schiff-base intermediate with acetaldehyde in catalysis. The active-site Proton donor/acceptor is the lysine 181.

The protein belongs to the DeoC/FbaB aldolase family. DeoC type 1 subfamily.

The protein resides in the cytoplasm. The enzyme catalyses 2-deoxy-D-ribose 5-phosphate = D-glyceraldehyde 3-phosphate + acetaldehyde. It participates in carbohydrate degradation; 2-deoxy-D-ribose 1-phosphate degradation; D-glyceraldehyde 3-phosphate and acetaldehyde from 2-deoxy-alpha-D-ribose 1-phosphate: step 2/2. Its function is as follows. Catalyzes a reversible aldol reaction between acetaldehyde and D-glyceraldehyde 3-phosphate to generate 2-deoxy-D-ribose 5-phosphate. This Bacillus cereus (strain B4264) protein is Deoxyribose-phosphate aldolase.